We begin with the raw amino-acid sequence, 164 residues long: MADENLQPLFQIQRVYLKDLSLEQPNSPAIFLEQEQPTIEVAVDVGAQPLAEGIFESTVTITVTAKIADKIAFLVEGKQAGIFEIRNIPDEQLDPLLGIGCPNVIYPYLRANIADAITRAGFPPVHLSEINFEVFYQQRLEALAQQQADNSSGIVMADGSAARH.

This sequence belongs to the SecB family. In terms of assembly, homotetramer, a dimer of dimers. One homotetramer interacts with 1 SecA dimer.

Its subcellular location is the cytoplasm. One of the proteins required for the normal export of preproteins out of the cell cytoplasm. It is a molecular chaperone that binds to a subset of precursor proteins, maintaining them in a translocation-competent state. It also specifically binds to its receptor SecA. The chain is Protein-export protein SecB from Janthinobacterium sp. (strain Marseille) (Minibacterium massiliensis).